A 660-amino-acid chain; its full sequence is Galactocerebrosidase (660 aa).

The first 18 residues, 1–18, serve as a signal peptide directing secretion; sequence MQTHNFLCIISVILGCSA. 2 residues coordinate substrate: T87 and W129. N147 carries N-linked (GlcNAc...) asparagine glycosylation. A substrate-binding site is contributed by N175. The active-site Proton donor/acceptor is E176. Catalysis depends on E251, which acts as the Nucleophile. Residues C264 and C371 are joined by a disulfide bond. 2 N-linked (GlcNAc...) asparagine glycosylation sites follow: N293 and N356. R373 serves as a coordination point for substrate. N-linked (GlcNAc...) asparagine glycosylation is found at N413, N465, N495, N499, N537, and N578.

The protein belongs to the glycosyl hydrolase 59 family.

It localises to the lysosome. The enzyme catalyses a beta-D-galactosyl-(1&lt;-&gt;1')-N-acylsphing-4-enine + H2O = an N-acylsphing-4-enine + D-galactose. It carries out the reaction beta-D-galactosyl-(1&lt;-&gt;1)-sphing-4-enine + H2O = sphing-4-enine + D-galactose. The catalysed reaction is a D-galactosylceramide + H2O = an N-acyl-sphingoid base + D-galactose. Hydrolyzes the galactose ester bonds of glycolipids such as galactosylceramide and galactosylsphingosine. In Danio rerio (Zebrafish), this protein is Galactocerebrosidase.